A 505-amino-acid chain; its full sequence is Putative diacyglycerol O-acyltransferase MT0919 (505 aa).

His-167 functions as the Proton acceptor in the catalytic mechanism.

The protein belongs to the long-chain O-acyltransferase family.

It carries out the reaction an acyl-CoA + a 1,2-diacyl-sn-glycerol = a triacyl-sn-glycerol + CoA. It participates in glycerolipid metabolism; triacylglycerol biosynthesis. In Mycobacterium tuberculosis (strain CDC 1551 / Oshkosh), this protein is Putative diacyglycerol O-acyltransferase MT0919.